Reading from the N-terminus, the 341-residue chain is Protein arginine N-methyltransferase 1 (341 aa).

One can recognise an SAM-dependent MTase PRMT-type domain in the interval 20–315; the sequence is ADYYFDSYSH…DCAPFDKNQR (296 aa). The S-adenosyl-L-methionine site is built by His33, Arg42, Gly66, Asp88, and Glu117. Active-site residues include Glu132 and Glu141.

This sequence belongs to the class I-like SAM-binding methyltransferase superfamily. Protein arginine N-methyltransferase family.

The protein resides in the nucleus. It is found in the cytoplasm. Its subcellular location is the cytosol. The enzyme catalyses L-arginyl-[protein] + 2 S-adenosyl-L-methionine = N(omega),N(omega)-dimethyl-L-arginyl-[protein] + 2 S-adenosyl-L-homocysteine + 2 H(+). The catalysed reaction is L-arginyl-[protein] + S-adenosyl-L-methionine = N(omega)-methyl-L-arginyl-[protein] + S-adenosyl-L-homocysteine + H(+). Its function is as follows. Arginine methyltransferase that methylates the guanidino nitrogens of arginyl residues present in proteins such as ribonucleoproteins and histones. In Dictyostelium discoideum (Social amoeba), this protein is Protein arginine N-methyltransferase 1 (prmt1).